We begin with the raw amino-acid sequence, 252 residues long: MRILVSNDDGYNAPGLEALVEALSGLGELTVVAPETNHSGASNSLTLNRPLTVRTAANGFIYVNGTPSDCVHVALTGLMDARPDLVVSGINNGANMGDDTLYSGTVAAASEGYLFGIPSIAFSLIEKGWQHIESAARAARQVVERQIAQPLAAPVLLNVNIPNRRYEDMKGYAVTRLGKRHPSEPVVRTTTPYGDTVYWVGPVGLAADATPGTDFHATAQGQVSVTPLRLDLTQHSQLDDVRNWAEPLCVNA.

Residues Asp8, Asp9, Ser39, and Asn91 each contribute to the a divalent metal cation site.

Belongs to the SurE nucleotidase family. A divalent metal cation is required as a cofactor.

The protein localises to the cytoplasm. It catalyses the reaction a ribonucleoside 5'-phosphate + H2O = a ribonucleoside + phosphate. Functionally, nucleotidase that shows phosphatase activity on nucleoside 5'-monophosphates. This is 5'-nucleotidase SurE from Bordetella pertussis (strain Tohama I / ATCC BAA-589 / NCTC 13251).